Reading from the N-terminus, the 236-residue chain is (5-formylfuran-3-yl)methyl phosphate synthase (236 aa).

Lysine 27 acts as the Schiff-base intermediate with substrate in catalysis. The active-site Proton acceptor is lysine 85.

The protein belongs to the MfnB family.

The enzyme catalyses 2 D-glyceraldehyde 3-phosphate = 4-(hydroxymethyl)-2-furancarboxaldehyde phosphate + phosphate + 2 H2O. It functions in the pathway cofactor biosynthesis; methanofuran biosynthesis. Catalyzes the formation of 4-(hydroxymethyl)-2-furancarboxaldehyde phosphate (4-HFC-P) from two molecules of glyceraldehyde-3-P (GA-3-P). The sequence is that of (5-formylfuran-3-yl)methyl phosphate synthase from Methanothermobacter thermautotrophicus (strain ATCC 29096 / DSM 1053 / JCM 10044 / NBRC 100330 / Delta H) (Methanobacterium thermoautotrophicum).